Reading from the N-terminus, the 139-residue chain is Large ribosomal subunit protein uL16c (139 aa).

Over residues 1–17 the composition is skewed to basic residues; the sequence is MLSPKKTKFRKQHRGRM. Positions 1 to 23 are disordered; that stretch reads MLSPKKTKFRKQHRGRMKGSASK.

Belongs to the universal ribosomal protein uL16 family. In terms of assembly, part of the 50S ribosomal subunit.

It localises to the plastid. The protein resides in the chloroplast. This chain is Large ribosomal subunit protein uL16c, found in Pyropia yezoensis (Susabi-nori).